We begin with the raw amino-acid sequence, 83 residues long: Kappa-theraphotoxin-Cg2a (83 aa).

The N-terminal stretch at 1–21 (MKGSAFAIILGLVVLCACSFA) is a signal peptide. Positions 22 to 53 (EDEQDQFASPNELLRSMFLESRHELIPEVEGR) are excised as a propeptide. 3 cysteine pairs are disulfide-bonded: Cys-55–Cys-69, Cys-62–Cys-74, and Cys-68–Cys-78. Leu-82 is modified (leucine amide).

It belongs to the neurotoxin 30 (phrixotoxin) family. In terms of tissue distribution, expressed by the venom gland.

The protein resides in the secreted. In terms of biological role, inhibits voltage-gated potassium channels of the subtype Kv4.1/KCND1 with high affinity and shows weak effects on Kv4.2/KCND2 and Kv2.1/KCNB1 subtypes. The toxin modifies the gating behavior of the channel and may interact with the S3-S4 extracellular loop. The sequence is that of Kappa-theraphotoxin-Cg2a from Chilobrachys guangxiensis (Chinese earth tiger tarantula).